We begin with the raw amino-acid sequence, 265 residues long: uncharacterized protein (265 aa).

The a divalent metal cation site is built by H7, H9, E95, H131, H156, and D206.

The protein belongs to the metallo-dependent hydrolases superfamily. TatD-type hydrolase family. A divalent metal cation serves as cofactor.

This is an uncharacterized protein from Buchnera aphidicola subsp. Baizongia pistaciae (strain Bp).